A 212-amino-acid chain; its full sequence is Large ribosomal subunit protein bL25 (212 aa).

A disordered region spans residues 181 to 212 (LSEPKEEVIEEDVEEVSADVPTVSETEEEDAE). Over residues 188–197 (VIEEDVEEVS) the composition is skewed to acidic residues.

The protein belongs to the bacterial ribosomal protein bL25 family. CTC subfamily. Part of the 50S ribosomal subunit; part of the 5S rRNA/L5/L18/L25 subcomplex. Contacts the 5S rRNA. Binds to the 5S rRNA independently of L5 and L18.

This is one of the proteins that binds to the 5S RNA in the ribosome where it forms part of the central protuberance. The sequence is that of Large ribosomal subunit protein bL25 from Finegoldia magna (strain ATCC 29328 / DSM 20472 / WAL 2508) (Peptostreptococcus magnus).